The following is a 452-amino-acid chain: Tubulin alpha-1 chain (452 aa).

Gln11 contacts GTP. Lys40 carries the post-translational modification N6-acetyllysine. Residues Glu71, Gly144, Thr145, Thr179, Asn206, and Asn228 each coordinate GTP. Residue Glu71 participates in Mg(2+) binding. Residue Glu254 is part of the active site. A disordered region spans residues 430–452 (KDYEEVGAESGDGDDDGLGEEEY). Residues 431-452 (DYEEVGAESGDGDDDGLGEEEY) are compositionally biased toward acidic residues.

Belongs to the tubulin family. In terms of assembly, dimer of alpha and beta chains. A typical microtubule is a hollow water-filled tube with an outer diameter of 25 nm and an inner diameter of 15 nM. Alpha-beta heterodimers associate head-to-tail to form protofilaments running lengthwise along the microtubule wall with the beta-tubulin subunit facing the microtubule plus end conferring a structural polarity. Microtubules usually have 13 protofilaments but different protofilament numbers can be found in some organisms and specialized cells. Mg(2+) serves as cofactor. Undergoes a tyrosination/detyrosination cycle, the cyclic removal and re-addition of a C-terminal tyrosine residue by the enzymes tubulin tyrosine carboxypeptidase (TTCP) and tubulin tyrosine ligase (TTL), respectively. In terms of processing, acetylation of alpha chains at Lys-40 stabilizes microtubules and affects affinity and processivity of microtubule motors. This modification has a role in multiple cellular functions, ranging from cell motility, cell cycle progression or cell differentiation to intracellular trafficking and signaling.

The protein resides in the cytoplasm. The protein localises to the cytoskeleton. The catalysed reaction is GTP + H2O = GDP + phosphate + H(+). Tubulin is the major constituent of microtubules, a cylinder consisting of laterally associated linear protofilaments composed of alpha- and beta-tubulin heterodimers. Microtubules grow by the addition of GTP-tubulin dimers to the microtubule end, where a stabilizing cap forms. Below the cap, tubulin dimers are in GDP-bound state, owing to GTPase activity of alpha-tubulin. The polypeptide is Tubulin alpha-1 chain (TUBA1) (Pisum sativum (Garden pea)).